Reading from the N-terminus, the 282-residue chain is Heat stress transcription factor A-7b (282 aa).

Low complexity-rich tracts occupy residues 1-11 and 120-134; these read MDPSSSSRARS and SSSS…QSQP. Disordered regions lie at residues 1–24 and 117–139; these read MDPS…LQEA and RRTS…AHDP. A DNA-binding region spans residues 26 to 120; that stretch reads PSPFLTKTFE…LLKSIKRRTS (95 aa). The hydrophobic repeat HR-A/B stretch occupies residues 137 to 196; that stretch reads HDPGVELPQLREERHVLMMEISTLRQEEQRARGYVQAMEQRINGAEKKQRHMMSFLRRAV. The Nuclear localization signal signature appears at 208–212; the sequence is QKRDR. The short motif at 232–240 is the Nuclear export signal element; the sequence is LSELEALAL. Positions 259–268 match the AHA motif; the sequence is DGFWEELLMN.

It belongs to the HSF family. Class A subfamily. In terms of assembly, homotrimer. Exhibits temperature-dependent phosphorylation.

Its subcellular location is the cytoplasm. The protein resides in the nucleus. Its function is as follows. Transcriptional activator that specifically binds DNA sequence 5'-AGAAnnTTCT-3' known as heat shock promoter elements (HSE). This chain is Heat stress transcription factor A-7b (HSFA7B), found in Arabidopsis thaliana (Mouse-ear cress).